Here is a 183-residue protein sequence, read N- to C-terminus: Ribosome rescue factor SmrB (183 aa).

Positions 98–173 constitute a Smr domain; it reads LDLHGLTQLQ…GDAALLVLIE (76 aa).

It belongs to the SmrB family. As to quaternary structure, associates with collided ribosomes, but not with correctly translating polysomes.

Functionally, acts as a ribosome collision sensor. Detects stalled/collided disomes (pairs of ribosomes where the leading ribosome is stalled and a second ribosome has collided with it) and endonucleolytically cleaves mRNA at the 5' boundary of the stalled ribosome. Stalled/collided disomes form a new interface (primarily via the 30S subunits) that binds SmrB. Cleaved mRNA becomes available for tmRNA ligation, leading to ribosomal subunit dissociation and rescue of stalled ribosomes. This Escherichia coli O157:H7 protein is Ribosome rescue factor SmrB.